A 227-amino-acid chain; its full sequence is MQFTTFALLAVAAATASAQAPQAYYGQGAKSAQVHTFETRKAVPTRVAEVYGEHEQERVTKTKVYHALVTEEAQHHGEEHKAAPYKAYKVYSVASSYSAQPRATHAAEHYGEGKKADHYAEPAKAVHADPHHVDPVKARPTMAATEMKQPEKEAPSTVCAKGSEISCCTTDSSNSGALGNVLGGSCLLQNLSLLSLNSNCAAANTFCCPTTQEGTLNINLSCIPISL.

The first 18 residues, 1–18 (MQFTTFALLAVAAATASA), serve as a signal peptide directing secretion. Cystine bridges form between Cys-159/Cys-207, Cys-167/Cys-200, Cys-168/Cys-186, and Cys-208/Cys-222. Asn-190 and Asn-219 each carry an N-linked (GlcNAc...) asparagine glycan.

It belongs to the fungal hydrophobin family. In terms of assembly, self-assembles to form functional amyloid fibrils called rodlets. Self-assembly into fibrillar rodlets occurs spontaneously at hydrophobic:hydrophilic interfaces and the rodlets further associate laterally to form amphipathic monolayers. As to expression, expressed in conidia and aerial hyphae.

The protein localises to the secreted. The protein resides in the cell wall. In terms of biological role, aerial growth, conidiation, and dispersal of filamentous fungi in the environment rely upon a capability of their secreting small amphipathic proteins called hydrophobins (HPBs) with low sequence identity. Class I can self-assemble into an outermost layer of rodlet bundles on aerial cell surfaces, conferring cellular hydrophobicity that supports fungal growth, development and dispersal; whereas Class II form highly ordered films at water-air interfaces through intermolecular interactions but contribute nothing to the rodlet structure. Hcf-4 is a class I hydrophobin that is involved in the development and germination of conidia. In Passalora fulva (Tomato leaf mold), this protein is Class I hydrophobin 4.